A 922-amino-acid chain; its full sequence is MARVLAQSLSVPGLVAGHKDSQHKGSGKSKRSVKTMCALRTSGLRMSGFSGLRTFNHLNTMMRPGLDFHSKVSKAVSSRRARAKRFIPRAMFERFTEKAIKVIMLAQEEARRLGHNFVGTEQILLGLIGEGTGIAAKVLKSMGINLKDARVEVEKIIGRGSGFVAVEIPFTPRAKRVLELSQEEARQLGHNYIGSEHLLLGLLREGEGVAARVLENLGADPTNIRTQVIRMVGESADSVTATVGSGSSNNKTPTLEEYGTNLTKLAEEGKLDPVVGRQPQIERVTQILGRRTKNNPCLIGEPGVGKTAIAEGLAQRIANGDVPETIEGKKVITLDMGLLVAGTKYRGEFEERLKKLMEEIKQSDDIILFIDEVHTLIGAGAAEGAIDAANILKPALARGELQCIGATTLDEYRKHIEKDPDLERRFQPVKVPEPTVDETIQILKGLRERYEIHHKLRYTDEALIAAAQLSYQYISDRFLPDKAIDLVDEAGSRVRLQHAQLPEEAKELDKEVRKIVKEKEEYVRNQDFEKAGELRDKEMDLKAQISALIEKGKEMSKAETETADEGPIVTEVDIQHIVSSWTGIPVDKVSADESDRLLKMEDTLHKRIIGQDEAVQAISRAIRRARVGLKNPNRPIASFIFSGPTGVGKSELAKALAAYYFGSEEAMIRLDMSEFMERHTVSKLIGSPPGYVGYTEGGQLTEAVRRRPYTVVLFDEIEKAHPDVFNMMLQILEDGRLTDSKGRTVDFKNTLLIMTSNVGSSVIEKGGRRIGFDLDYDEKDSSYNRIKSLVTEELKQYFRPEFLNRLDEMIVFRQLTKLEVKEIADIMLKEVFQRLKTKEIELQVTERFRDRVVDEGYNPSYGARPLRRAIMRLLEDSMAEKMLAREIKEGDSVIVDVDSDGKVIVLNGSSGTPESLPEALSI.

The N-terminal 72 residues, 1–72 (MARVLAQSLS…RPGLDFHSKV (72 aa)), are a transit peptide targeting the chloroplast. A Clp R domain is found at 92–234 (FERFTEKAIK…RTQVIRMVGE (143 aa)). Repeat stretches follow at residues 95-160 (FTEK…IGRG) and 170-234 (FTPR…MVGE). The segment at 255–502 (LEEYGTNLTK…RVRLQHAQLP (248 aa)) is i. 300-307 (GEPGVGKT) provides a ligand contact to ATP. The UVR domain occupies 509–544 (DKEVRKIVKEKEEYVRNQDFEKAGELRDKEMDLKAQ). An II region spans residues 569 to 760 (VTEVDIQHIV…LLIMTSNVGS (192 aa)). ATP is bound at residue 643 to 650 (GPTGVGKS).

Belongs to the ClpA/ClpB family. ClpC subfamily.

It is found in the plastid. The protein localises to the chloroplast. Its function is as follows. Molecular chaperone that may interact with a ClpP-like protease involved in degradation of denatured proteins in the chloroplast. The polypeptide is Chaperone protein ClpC, chloroplastic (Pisum sativum (Garden pea)).